Reading from the N-terminus, the 901-residue chain is HTH-type transcriptional regulator MalT (901 aa).

39 to 46 (SPAGYGKT) contributes to the ATP binding site. The region spanning 829–894 (ELIHTSPLTQ…AAVQHAQKLL (66 aa)) is the HTH luxR-type domain. A DNA-binding region (H-T-H motif) is located at residues 853–872 (NEQIAGELEVAATTIKTHIR).

The protein belongs to the MalT family. In terms of assembly, monomer in solution. Oligomerizes to an active state in the presence of the positive effectors ATP and maltotriose.

With respect to regulation, activated by ATP and maltotriose, which are both required for DNA binding. Functionally, positively regulates the transcription of the maltose regulon whose gene products are responsible for uptake and catabolism of malto-oligosaccharides. Specifically binds to the promoter region of its target genes, recognizing a short DNA motif called the MalT box. This chain is HTH-type transcriptional regulator MalT, found in Shigella sonnei (strain Ss046).